The following is a 461-amino-acid chain: Fumarate hydratase class II (461 aa).

Residues 97 to 99 (SGT), R125, 128 to 131 (HPND), 138 to 140 (SSN), and T186 contribute to the substrate site. Catalysis depends on H187, which acts as the Proton donor/acceptor. S317 is an active-site residue. Substrate contacts are provided by residues S318 and 323–325 (KVN).

It belongs to the class-II fumarase/aspartase family. Fumarase subfamily. Homotetramer.

It is found in the cytoplasm. It catalyses the reaction (S)-malate = fumarate + H2O. The protein operates within carbohydrate metabolism; tricarboxylic acid cycle; (S)-malate from fumarate: step 1/1. In terms of biological role, involved in the TCA cycle. Catalyzes the stereospecific interconversion of fumarate to L-malate. The protein is Fumarate hydratase class II of Ralstonia nicotianae (strain ATCC BAA-1114 / GMI1000) (Ralstonia solanacearum).